The sequence spans 653 residues: PAN2-PAN3 deadenylation complex subunit PAN3 (653 aa).

Disordered regions lie at residues 1–21 (MASD…ENAK) and 45–128 (HDPN…AAPD). Residues 19-48 (NAKDTLCRNVTIYGRCRYEDKGCVYNHDPN) form a C3H1-type zinc finger. Low complexity predominate over residues 68 to 95 (SFTPSLLSSNGSSPTSSSATLKKTTTIS). Positions 108–119 (GISSRSNASTPS) are enriched in polar residues. Positions 256–516 (QTLPNTQLPA…TIDIFITGIS (261 aa)) are pseudokinase domain. ATP is bound by residues R308, 357 to 364 (DYHPLSKT), and 416 to 417 (SK). A coiled-coil region spans residues 517 to 555 (SQLMSTFDSALHMDDQLTSDLSRELENGRLVRLMTKLNF). The knob domain stretch occupies residues 556–653 (INERPEYEHD…ALLKPTRRVH (98 aa)).

It belongs to the protein kinase superfamily. PAN3 family. In terms of assembly, homodimer. Forms a heterotrimer with a catalytic subunit pan2 to form the poly(A)-nuclease (PAN) deadenylation complex. Interacts (via PAM-2 motif) with poly(A)-binding protein pab1 (via PABC domain), conferring substrate specificity of the enzyme complex.

It localises to the cytoplasm. Functionally, regulatory subunit of the poly(A)-nuclease (PAN) deadenylation complex, one of two cytoplasmic mRNA deadenylases involved in mRNA turnover. PAN specifically shortens poly(A) tails of RNA and the activity is stimulated by poly(A)-binding protein pab1. PAN deadenylation is followed by rapid degradation of the shortened mRNA tails by the CCR4-NOT complex. Deadenylated mRNAs are then degraded by two alternative mechanisms, namely exosome-mediated 3'-5' exonucleolytic degradation, or deadenylation-dependent mRNA decaping and subsequent 5'-3' exonucleolytic degradation by xrn1. May also be involved in post-transcriptional maturation of mRNA poly(A) tails. pan3 acts as a positive regulator for PAN activity, recruiting the catalytic subunit pan2 to mRNA via its interaction with RNA and with pab1. The polypeptide is PAN2-PAN3 deadenylation complex subunit PAN3 (Aspergillus terreus (strain NIH 2624 / FGSC A1156)).